Consider the following 385-residue polypeptide: Protein GOLM2 (385 aa).

Over 1–12 (MVGFGAPRRTGR) the chain is Cytoplasmic. Residues 13–33 (LPPFVLVALLAVIGLLAFNYW) traverse the membrane as a helical; Signal-anchor for type II membrane protein segment. Residues 34 to 385 (SVSARQAALH…YHKDHLNETL (352 aa)) are Lumenal-facing. Positions 44–193 (DELLGLQAQV…KEELDKQPQK (150 aa)) form a coiled coil. A disordered region spans residues 169–385 (LAERKREYEE…YHKDHLNETL (217 aa)). Composition is skewed to basic and acidic residues over residues 170-193 (AERKREYEENLTKQKEELDKQPQK) and 211-220 (EVKEKIEDPS). Over residues 265–283 (LPSQSKSLLEKQPSLQPLS) the composition is skewed to polar residues. Residues 285–299 (TEHEVKKPLPDKKET) show a composition bias toward basic and acidic residues. A compositionally biased stretch (acidic residues) spans 356–367 (NGDDGNVEDDDH). Positions 368–385 (DGQADAGEYHKDHLNETL) are enriched in basic and acidic residues.

Belongs to the GOLM family.

Its subcellular location is the membrane. The sequence is that of Protein GOLM2 (golm2) from Xenopus laevis (African clawed frog).